Consider the following 401-residue polypeptide: Argininosuccinate synthase (401 aa).

An ATP-binding site is contributed by 8-16 (AYSGGLDTS). Y85 is an L-citrulline binding site. G115 provides a ligand contact to ATP. Positions 117, 121, and 122 each coordinate L-aspartate. L-citrulline is bound at residue N121. L-citrulline is bound by residues R125, S173, E258, and Y270.

The protein belongs to the argininosuccinate synthase family. Type 1 subfamily. Homotetramer.

The protein localises to the cytoplasm. The catalysed reaction is L-citrulline + L-aspartate + ATP = 2-(N(omega)-L-arginino)succinate + AMP + diphosphate + H(+). It participates in amino-acid biosynthesis; L-arginine biosynthesis; L-arginine from L-ornithine and carbamoyl phosphate: step 2/3. This chain is Argininosuccinate synthase, found in Staphylococcus epidermidis (strain ATCC 35984 / DSM 28319 / BCRC 17069 / CCUG 31568 / BM 3577 / RP62A).